Consider the following 425-residue polypeptide: Glutamyl-tRNA reductase (425 aa).

Substrate contacts are provided by residues 49-52 (TCNR), Ser109, 114-116 (EGQ), and Gln120. The active-site Nucleophile is the Cys50. 189–194 (GAGETG) is a binding site for NADP(+).

Belongs to the glutamyl-tRNA reductase family. Homodimer.

It catalyses the reaction (S)-4-amino-5-oxopentanoate + tRNA(Glu) + NADP(+) = L-glutamyl-tRNA(Glu) + NADPH + H(+). The protein operates within porphyrin-containing compound metabolism; protoporphyrin-IX biosynthesis; 5-aminolevulinate from L-glutamyl-tRNA(Glu): step 1/2. It functions in the pathway porphyrin-containing compound metabolism; chlorophyll biosynthesis. Catalyzes the NADPH-dependent reduction of glutamyl-tRNA(Glu) to glutamate 1-semialdehyde (GSA). This Chlorobium luteolum (strain DSM 273 / BCRC 81028 / 2530) (Pelodictyon luteolum) protein is Glutamyl-tRNA reductase.